The chain runs to 60 residues: Large ribosomal subunit protein bL32 (60 aa).

The protein belongs to the bacterial ribosomal protein bL32 family.

In Geobacter sulfurreducens (strain ATCC 51573 / DSM 12127 / PCA), this protein is Large ribosomal subunit protein bL32.